A 310-amino-acid polypeptide reads, in one-letter code: Methionyl-tRNA formyltransferase (310 aa).

A (6S)-5,6,7,8-tetrahydrofolate-binding site is contributed by 111-114; sequence SLLP.

It belongs to the Fmt family.

It carries out the reaction L-methionyl-tRNA(fMet) + (6R)-10-formyltetrahydrofolate = N-formyl-L-methionyl-tRNA(fMet) + (6S)-5,6,7,8-tetrahydrofolate + H(+). In terms of biological role, attaches a formyl group to the free amino group of methionyl-tRNA(fMet). The formyl group appears to play a dual role in the initiator identity of N-formylmethionyl-tRNA by promoting its recognition by IF2 and preventing the misappropriation of this tRNA by the elongation apparatus. The polypeptide is Methionyl-tRNA formyltransferase (Rhodopseudomonas palustris (strain ATCC BAA-98 / CGA009)).